A 132-amino-acid chain; its full sequence is Agouti-signaling protein (132 aa).

An N-terminal signal peptide occupies residues 1-22 (MDVTRLLLATLLVFLCFFTAYS). Asparagine 39 is a glycosylation site (N-linked (GlcNAc...) asparagine). The segment at 61 to 87 (QISRKEAEKKRSSKKEASMKKVARPRT) is disordered. The span at 63–79 (SRKEAEKKRSSKKEASM) shows a compositional bias: basic and acidic residues. Disulfide bonds link cysteine 93–cysteine 108, cysteine 100–cysteine 114, cysteine 107–cysteine 125, cysteine 111–cysteine 132, and cysteine 116–cysteine 123. In terms of domain architecture, Agouti spans 93-132 (CVATRDSCKPPAPACCDPCAFCQCRFFRSACSCRVLSLNC).

The protein resides in the secreted. Functionally, involved in the regulation of melanogenesis. The binding of ASP to MC1R precludes alpha-MSH initiated signaling and thus blocks production of cAMP, leading to a down-regulation of eumelanogenesis (brown/black pigment) and thus increasing synthesis of pheomelanin (yellow/red pigment). The sequence is that of Agouti-signaling protein (ASIP) from Macaca hecki (Heck's macaque).